A 202-amino-acid chain; its full sequence is Ras-related protein Rab-18 (202 aa).

12 residues coordinate GTP: Ser-18, Gly-21, Lys-22, Ser-23, Ser-24, Asp-35, Pro-36, Thr-41, Gly-67, Lys-124, Asp-126, and Ala-153. Residues 38 to 46 (QAATIGVDF) carry the Effector region motif. S-geranylgeranyl cysteine attachment occurs at residues Cys-198 and Cys-200.

It belongs to the small GTPase superfamily. Rab family.

The protein resides in the cell membrane. It carries out the reaction GTP + H2O = GDP + phosphate + H(+). Functionally, the small GTPases Rab are key regulators of intracellular membrane trafficking, from the formation of transport vesicles to their fusion with membranes. Rabs cycle between an inactive GDP-bound form and an active GTP-bound form that is able to recruit to membranes different sets of downstream effectors directly responsible for vesicle formation, movement, tethering and fusion. This chain is Ras-related protein Rab-18 (RAB18A), found in Lymnaea stagnalis (Great pond snail).